The chain runs to 61 residues: Metallothionein-2A (61 aa).

N-acetylmethionine is present on methionine 1. The interval 1 to 29 is beta; sequence MDPNCSCAAGGSCTCAGSCKCKDCKCTSC. Cysteine 5, cysteine 7, cysteine 13, cysteine 15, cysteine 19, cysteine 21, cysteine 24, cysteine 26, cysteine 29, cysteine 33, cysteine 34, cysteine 36, cysteine 37, cysteine 41, cysteine 44, cysteine 48, cysteine 50, and cysteine 57 together coordinate a divalent metal cation. The tract at residues 30-61 is alpha; sequence KKSCCSCCPVGCAKCAQGCICKGASDKCSCCA. Serine 58 bears the Phosphoserine mark. Residues cysteine 59 and cysteine 60 each contribute to the a divalent metal cation site.

Belongs to the metallothionein superfamily. Type 1 family. In terms of assembly, interacts with EOLA1.

Functionally, metallothioneins have a high content of cysteine residues that bind various heavy metals; these proteins are transcriptionally regulated by both heavy metals and glucocorticoids. This is Metallothionein-2A (MT2A) from Sus scrofa (Pig).